We begin with the raw amino-acid sequence, 35 residues long: Photosystem II reaction center protein Psb30 (35 aa).

Residues 6–26 form a helical membrane-spanning segment; sequence VIVQLVFLALIITTGPVIIVY.

This sequence belongs to the Psb30/Ycf12 family. PSII is composed of 1 copy each of membrane proteins PsbA, PsbB, PsbC, PsbD, PsbE, PsbF, PsbH, PsbI, PsbJ, PsbK, PsbL, PsbM, PsbT, PsbY, PsbZ, Psb30/Ycf12, peripheral proteins of the oxygen-evolving complex and a large number of cofactors. It forms dimeric complexes.

The protein localises to the plastid. The protein resides in the chloroplast thylakoid membrane. A core subunit of photosystem II (PSII), probably helps stabilize the reaction center. The chain is Photosystem II reaction center protein Psb30 from Cyanidium caldarium (Red alga).